The chain runs to 199 residues: Recombination protein RecR (199 aa).

The segment at 58–73 (CSTCNNLTDKDPCTIC) adopts a C4-type zinc-finger fold. Residues 81–176 (NLICVVQDAR…RVTRLAYGLP (96 aa)) form the Toprim domain.

The protein belongs to the RecR family.

May play a role in DNA repair. It seems to be involved in an RecBC-independent recombinational process of DNA repair. It may act with RecF and RecO. The sequence is that of Recombination protein RecR from Natranaerobius thermophilus (strain ATCC BAA-1301 / DSM 18059 / JW/NM-WN-LF).